The sequence spans 436 residues: 3-ketoacyl-CoA thiolase (436 aa).

The Acyl-thioester intermediate role is filled by cysteine 99. Active-site proton acceptor residues include histidine 392 and cysteine 422.

It belongs to the thiolase-like superfamily. Thiolase family. As to quaternary structure, heterotetramer of two alpha chains (FadJ) and two beta chains (FadI).

The protein resides in the cytoplasm. It carries out the reaction an acyl-CoA + acetyl-CoA = a 3-oxoacyl-CoA + CoA. Its pathway is lipid metabolism; fatty acid beta-oxidation. In terms of biological role, catalyzes the final step of fatty acid oxidation in which acetyl-CoA is released and the CoA ester of a fatty acid two carbons shorter is formed. The polypeptide is 3-ketoacyl-CoA thiolase (Salmonella heidelberg (strain SL476)).